The sequence spans 894 residues: B-cell lymphoma/leukemia 11B (894 aa).

A phosphoserine mark is found at S97 and S110. At T120 the chain carries Phosphothreonine. The residue at position 129 (S129) is a Phosphoserine. K137 is covalently cross-linked (Glycyl lysine isopeptide (Lys-Gly) (interchain with G-Cter in SUMO2)). The C2H2-type 1 zinc-finger motif lies at 221 to 251 (YICTTCKQPFNSAWFLLQHAQNTHGFRIYLE). Position 256 is a phosphoserine (S256). At T260 the chain carries Phosphothreonine. Position 277 is a phosphoserine (S277). Position 293 is an omega-N-methylarginine (R293). At R322 the chain carries Asymmetric dimethylarginine. S358 is subject to Phosphoserine. Disordered stretches follow at residues 370–428 (LAGN…KSKS) and 471–583 (KRHM…GGGA). T376 is subject to Phosphothreonine. 3 positions are modified to phosphoserine: S381, S398, and S401. Residues 396–423 (QPSPKSPFLSTPPLPPMPPGGTPPPQPP) are compositionally biased toward pro residues. A phosphothreonine mark is found at T406 and T417. 2 C2H2-type zinc fingers span residues 427–454 (KSCE…GEKP) and 455–482 (YKCQ…HKAG). Positions 471–480 (KRHMKTHMHK) are enriched in basic residues. Phosphoserine occurs at positions 483, 488, 496, and 497. The segment covering 511-529 (KAADGDFRHHESDPSLGHE) has biased composition (basic and acidic residues). The segment covering 530-546 (PEEEDEEEEEEEEELLL) has biased composition (acidic residues). Residues 568–583 (NGGGGVPGVPGAGGGA) show a composition bias toward gly residues. Glycyl lysine isopeptide (Lys-Gly) (interchain with G-Cter in SUMO2) cross-links involve residues K591 and K617. A disordered region spans residues 653-680 (GRGGGFAPGTEPFPGLFPRKPAPLPSPG). S678 bears the Phosphoserine mark. Glycyl lysine isopeptide (Lys-Gly) (interchain with G-Cter in SUMO2) cross-links involve residues K686 and K723. Positions 737 to 752 (FATSSEHSSENGSLRF) are enriched in polar residues. Positions 737–794 (FATSSEHSSENGSLRFSTPPGDLLDGGLSGRSGTASGGSTPHLGGPGPGRPSSKEGRR) are disordered. The segment covering 753 to 775 (STPPGDLLDGGLSGRSGTASGGS) has biased composition (low complexity). T754 is modified (phosphothreonine). 2 positions are modified to phosphoserine: S765 and S772. 3 consecutive C2H2-type zinc fingers follow at residues 796 to 823 (DTCE…GERP), 824 to 853 (YKCE…GKEV), and 854 to 884 (YRCD…LLTN). K851 bears the N6-acetyllysine mark. Residue K887 forms a Glycyl lysine isopeptide (Lys-Gly) (interchain with G-Cter in SUMO2) linkage.

In terms of assembly, interacts with TFCOUP1, SIRT1, ARP1 and EAR2. Interacts with EP300; the interaction is detected in activated T-lymphocytes, but not under resting conditions. Post-translationally, sumoylated with SUMO1. Highly expressed in brain and in malignant T-cell lines derived from patients with adult T-cell leukemia/lymphoma.

The protein resides in the nucleus. In terms of biological role, key regulator of both differentiation and survival of T-lymphocytes during thymocyte development in mammals. Essential in controlling the responsiveness of hematopoietic stem cells to chemotactic signals by modulating the expression of the receptors CCR7 and CCR9, which direct the movement of progenitor cells from the bone marrow to the thymus. Is a regulator of IL2 promoter and enhances IL2 expression in activated CD4(+) T-lymphocytes. Tumor-suppressor that represses transcription through direct, TFCOUP2-independent binding to a GC-rich response element. May also function in the P53-signaling pathway. The sequence is that of B-cell lymphoma/leukemia 11B (BCL11B) from Homo sapiens (Human).